The following is a 184-amino-acid chain: Acireductone dioxygenase (184 aa).

Positions 97, 99, 103, and 141 each coordinate Fe(2+). The Ni(2+) site is built by H97, H99, E103, and H141.

The protein belongs to the acireductone dioxygenase (ARD) family. In terms of assembly, monomer. Requires Fe(2+) as cofactor. Ni(2+) is required as a cofactor.

It catalyses the reaction 1,2-dihydroxy-5-(methylsulfanyl)pent-1-en-3-one + O2 = 3-(methylsulfanyl)propanoate + CO + formate + 2 H(+). It carries out the reaction 1,2-dihydroxy-5-(methylsulfanyl)pent-1-en-3-one + O2 = 4-methylsulfanyl-2-oxobutanoate + formate + 2 H(+). Its pathway is amino-acid biosynthesis; L-methionine biosynthesis via salvage pathway; L-methionine from S-methyl-5-thio-alpha-D-ribose 1-phosphate: step 5/6. Functionally, catalyzes 2 different reactions between oxygen and the acireductone 1,2-dihydroxy-3-keto-5-methylthiopentene (DHK-MTPene) depending upon the metal bound in the active site. Fe-containing acireductone dioxygenase (Fe-ARD) produces formate and 2-keto-4-methylthiobutyrate (KMTB), the alpha-ketoacid precursor of methionine in the methionine recycle pathway. Ni-containing acireductone dioxygenase (Ni-ARD) produces methylthiopropionate, carbon monoxide and formate, and does not lie on the methionine recycle pathway. The chain is Acireductone dioxygenase from Parvibaculum lavamentivorans (strain DS-1 / DSM 13023 / NCIMB 13966).